The chain runs to 286 residues: Probable endonuclease 4 (286 aa).

Residues His72, His112, Glu147, Asp181, His184, His215, Asp228, His230, and Glu260 each coordinate Zn(2+).

The protein belongs to the AP endonuclease 2 family. Requires Zn(2+) as cofactor.

It catalyses the reaction Endonucleolytic cleavage to 5'-phosphooligonucleotide end-products.. In terms of biological role, endonuclease IV plays a role in DNA repair. It cleaves phosphodiester bonds at apurinic or apyrimidinic (AP) sites, generating a 3'-hydroxyl group and a 5'-terminal sugar phosphate. In Mycoplasma pneumoniae (strain ATCC 29342 / M129 / Subtype 1) (Mycoplasmoides pneumoniae), this protein is Probable endonuclease 4.